Here is a 262-residue protein sequence, read N- to C-terminus: tRNA pseudouridine synthase A (262 aa).

Asp54 acts as the Nucleophile in catalysis. A substrate-binding site is contributed by Tyr113.

Belongs to the tRNA pseudouridine synthase TruA family. As to quaternary structure, homodimer.

The catalysed reaction is uridine(38/39/40) in tRNA = pseudouridine(38/39/40) in tRNA. In terms of biological role, formation of pseudouridine at positions 38, 39 and 40 in the anticodon stem and loop of transfer RNAs. This is tRNA pseudouridine synthase A from Lactobacillus delbrueckii subsp. bulgaricus (strain ATCC BAA-365 / Lb-18).